We begin with the raw amino-acid sequence, 299 residues long: ATP phosphoribosyltransferase (299 aa).

Belongs to the ATP phosphoribosyltransferase family. Long subfamily. In terms of assembly, equilibrium between an active dimeric form, an inactive hexameric form and higher aggregates. Interconversion between the various forms is largely reversible and is influenced by the natural substrates and inhibitors of the enzyme. It depends on Mg(2+) as a cofactor.

It localises to the cytoplasm. The enzyme catalyses 1-(5-phospho-beta-D-ribosyl)-ATP + diphosphate = 5-phospho-alpha-D-ribose 1-diphosphate + ATP. It functions in the pathway amino-acid biosynthesis; L-histidine biosynthesis; L-histidine from 5-phospho-alpha-D-ribose 1-diphosphate: step 1/9. With respect to regulation, feedback inhibited by histidine. Catalyzes the condensation of ATP and 5-phosphoribose 1-diphosphate to form N'-(5'-phosphoribosyl)-ATP (PR-ATP). Has a crucial role in the pathway because the rate of histidine biosynthesis seems to be controlled primarily by regulation of HisG enzymatic activity. The chain is ATP phosphoribosyltransferase from Salmonella agona (strain SL483).